The following is a 153-amino-acid chain: Small ribosomal subunit protein bS6 (153 aa).

The disordered stretch occupies residues 97–153 (EEGPSAMMRKADRDRERDDRGGGFRGERDGGGFRGDRGDRGDRGPRRPRDEETADEE). Residues 105–147 (RKADRDRERDDRGGGFRGERDGGGFRGDRGDRGDRGPRRPRDE) show a composition bias toward basic and acidic residues.

The protein belongs to the bacterial ribosomal protein bS6 family.

Binds together with bS18 to 16S ribosomal RNA. The chain is Small ribosomal subunit protein bS6 from Bradyrhizobium sp. (strain BTAi1 / ATCC BAA-1182).